The following is a 206-amino-acid chain: Large ribosomal subunit protein uL22m (206 aa).

The transit peptide at 1 to 40 (MAAALLRELGALWVPNLRIWTTQMLRVLPQSCIHTSTSLD) directs the protein to the mitochondrion.

This sequence belongs to the universal ribosomal protein uL22 family. As to quaternary structure, component of the mitochondrial ribosome large subunit (39S) which comprises a 16S rRNA and about 50 distinct proteins.

The protein localises to the mitochondrion. In Rattus norvegicus (Rat), this protein is Large ribosomal subunit protein uL22m (Mrpl22).